Here is a 359-residue protein sequence, read N- to C-terminus: Isopentenyl-diphosphate delta-isomerase (359 aa).

Substrate is bound at residue 11-12 (RK). FMN contacts are provided by residues Ser68, 69 to 71 (GMT), Ser99, and Asn127. Residue 99 to 101 (SQR) participates in substrate binding. Gln163 contributes to the substrate binding site. Residue Glu164 participates in Mg(2+) binding. Residues Lys199, Thr229, 278–280 (GIR), and 299–300 (AL) each bind FMN.

Belongs to the IPP isomerase type 2 family. As to quaternary structure, homooctamer. Dimer of tetramers. It depends on FMN as a cofactor. The cofactor is NADPH. Mg(2+) is required as a cofactor.

The protein resides in the cytoplasm. It catalyses the reaction isopentenyl diphosphate = dimethylallyl diphosphate. Its activity is regulated as follows. Inhibited by 3,4-epoxy-3-methylbutyl diphosphate (EIPP). Involved in the biosynthesis of isoprenoids. Catalyzes the 1,3-allylic rearrangement of the homoallylic substrate isopentenyl (IPP) to its allylic isomer, dimethylallyl diphosphate (DMAPP). This chain is Isopentenyl-diphosphate delta-isomerase, found in Methanocaldococcus jannaschii (strain ATCC 43067 / DSM 2661 / JAL-1 / JCM 10045 / NBRC 100440) (Methanococcus jannaschii).